The chain runs to 790 residues: Transient receptor potential cation channel subfamily V member 3 (790 aa).

At 1–430 the chain is on the cytoplasmic side; sequence MKAHPKEMVP…TLEPLHTLLH (430 aa). 3 disordered regions span residues 15–34, 52–71, and 76–112; these read RVAAPSGNPAILPEKRPAEI, PNPTVAKTSPPVFSKPMDSN, and ISGNCDDMDSPQSPQDDVTETPSNPNSPSAQLAKEEQ. Residues 95-105 show a composition bias toward polar residues; the sequence is ETPSNPNSPSA. ANK repeat units follow at residues 117–148, 170–198, 214–243, 261–291, 298–330, 340–362, and 398–420; these read RRLKKRIFAAVSEGCVEELVELLVELQELCRR, TCLMKALLNINPNTKEIVRILLAFAEEND, EGQTALNIAIERRQGDIAALLIAAGADVNA, FGETPLALAACTNQPEIVQLLMEHEQTDITS, NILHALVTVAEDFKTQNDFVKRMYDMILLRSGN, DGLTPLQLAAKMGKAEILKYILS, and TTDNSVLEITVYNTNIDNRHEML. Residues 431-460 form a helical membrane-spanning segment; it reads MKWKKFAKHMFFLSFCFYFFYNITLTLVSY. The Extracellular portion of the chain corresponds to 461 to 479; that stretch reads YRPREEEAIPHPLALTHKM. Residues 480-508 traverse the membrane as a helical segment; it reads GWLQLLGRMFVLIWAMCISVKEGIAIFLL. Topologically, residues 509–519 are cytoplasmic; that stretch reads RPSDLQSILSD. A helical transmembrane segment spans residues 520–540; the sequence is AWFHFVFFIQAVLVILSVFLY. Residues 541–545 lie on the Extracellular side of the membrane; the sequence is LFAYK. The helical transmembrane segment at 546 to 566 threads the bilayer; that stretch reads EYLACLVLAMALGWANMLYYT. Residues 567-569 are Cytoplasmic-facing; the sequence is RGF. Residues 570–608 form a helical membrane-spanning segment; the sequence is QSMGMYSVMIQKVILHDVLKFLFVYIVFLLGFGVALASL. Residues 609–620 lie on the Extracellular side of the membrane; it reads IEKCPKDNKDCS. The segment at residues 621–646 is an intramembrane region (pore-forming); the sequence is SYGSFSDAVLELFKLTIGLGDLNIQQ. Gly-638 is a binding site for Na(+). Topologically, residues 647–649 are extracellular; the sequence is NSK. A helical membrane pass occupies residues 650–686; sequence YPILFLFLLITYVILTFVLLLNMLIALMGETVENVSK. Residues 687 to 790 lie on the Cytoplasmic side of the membrane; that stretch reads ESERIWRLQR…EVEEFPETSV (104 aa).

Belongs to the transient receptor (TC 1.A.4) family. TrpV subfamily. TRPV3 sub-subfamily. In terms of assembly, homotetramer. May convert from a homotetramer to a homopentamer to allow pore dilation. Interacts with TRPV1; may form a heteromeric channel with TRPV1. Interacts with SNX11; this interaction promotes TRPV3 trafficking from the cell membrane to lysosome for degradation. As to expression, abundantly expressed in CNS. Widely expressed at low levels. Detected in dorsal root ganglion (at protein level). Expressed in the keratinocyte layers of the outer root sheath and, to lesser extent, to the matrix of the hair follicles (at protein level).

The protein localises to the cell membrane. Its subcellular location is the cytoplasm. It is found in the lysosome. It catalyses the reaction Ca(2+)(in) = Ca(2+)(out). It carries out the reaction Mg(2+)(in) = Mg(2+)(out). The catalysed reaction is Na(+)(in) = Na(+)(out). The enzyme catalyses K(+)(in) = K(+)(out). Its activity is regulated as follows. Activated by cannabinoid that binds to the vanilloid binding pocket. Diphenylboronic anhydride induces pore dilation and enhances cation permeability by promoting the conversion to a homopentamer. Its function is as follows. Non-selective calcium permeant cation channel. It is activated by innocuous (warm) temperatures and shows an increased response at noxious temperatures greater than 39 degrees Celsius. Activation exhibits an outward rectification. The channel pore can dilate to provide permeability to larger cations. May associate with TRPV1 and may modulate its activity. Is a negative regulator of hair growth and cycling: TRPV3-coupled signaling suppresses keratinocyte proliferation in hair follicles and induces apoptosis and premature hair follicle regression (catagen). In Homo sapiens (Human), this protein is Transient receptor potential cation channel subfamily V member 3 (TRPV3).